The sequence spans 417 residues: Serine hydroxymethyltransferase (417 aa).

(6S)-5,6,7,8-tetrahydrofolate is bound by residues leucine 121 and 125–127; that span reads GHL. Lysine 229 is subject to N6-(pyridoxal phosphate)lysine. Residue 355–357 coordinates (6S)-5,6,7,8-tetrahydrofolate; the sequence is SPF.

Belongs to the SHMT family. Homodimer. It depends on pyridoxal 5'-phosphate as a cofactor.

Its subcellular location is the cytoplasm. The catalysed reaction is (6R)-5,10-methylene-5,6,7,8-tetrahydrofolate + glycine + H2O = (6S)-5,6,7,8-tetrahydrofolate + L-serine. It functions in the pathway one-carbon metabolism; tetrahydrofolate interconversion. The protein operates within amino-acid biosynthesis; glycine biosynthesis; glycine from L-serine: step 1/1. Catalyzes the reversible interconversion of serine and glycine with tetrahydrofolate (THF) serving as the one-carbon carrier. This reaction serves as the major source of one-carbon groups required for the biosynthesis of purines, thymidylate, methionine, and other important biomolecules. Also exhibits THF-independent aldolase activity toward beta-hydroxyamino acids, producing glycine and aldehydes, via a retro-aldol mechanism. This chain is Serine hydroxymethyltransferase, found in Enterobacter sp. (strain 638).